A 413-amino-acid chain; its full sequence is MDIEIIAIGDELTSGRILNTTSSFAAKQLFEAGYEIYGMSTIGDTPEVIGEALKRSIERVDAVLVTGGLGSTDDDLTNEAVSRAFGLPTLPNLEILSIVRAHFAQITDAPVGQLEKLAWLPEGAEVFDPQSGMAGYQLIYEDKPIFFLPGVPHQMKALMVEHVLPRLATWHTHRHVSTFQRVFRIFNLPENEVNTRVSRLKLTNDVHIGYYPVFPEVHLSLLIRDTNPKTAKRLFDSSCRAIKTALGDHIYGYDRDTMSQIVGQALVKRGMTLAVAESCTGGLIAQKLTDMPGSSRYFLGGVTSYHNSMKTAFLDVPERLIEKEGAVSPEVAEAMAYGILEKTGADVTLSVTGIAGPGGGTLEKPVGTVYIAASTPHGDWVNAFQFKGSREQIRELSAQHSLDILRRYLLQDI.

The protein belongs to the CinA family.

The chain is CinA-like protein from Desulfotalea psychrophila (strain LSv54 / DSM 12343).